The sequence spans 497 residues: Glycerol kinase (497 aa).

Thr13 contributes to the ADP binding site. Thr13, Thr14, and Ser15 together coordinate ATP. Thr13 is a sn-glycerol 3-phosphate binding site. Residue Arg17 participates in ADP binding. Sn-glycerol 3-phosphate contacts are provided by Arg83, Glu84, and Tyr135. Glycerol contacts are provided by Arg83, Glu84, and Tyr135. Position 231 is a phosphohistidine; by HPr (His231). Asp245 contributes to the sn-glycerol 3-phosphate binding site. Asp245 and Gln246 together coordinate glycerol. The ADP site is built by Thr267 and Gly310. Thr267, Gly310, Gln314, and Gly411 together coordinate ATP. ADP contacts are provided by Gly411 and Asn415.

This sequence belongs to the FGGY kinase family. As to quaternary structure, homotetramer and homodimer (in equilibrium). The phosphoenolpyruvate-dependent sugar phosphotransferase system (PTS), including enzyme I, and histidine-containing protein (HPr) are required for the phosphorylation, which leads to the activation of the enzyme.

The enzyme catalyses glycerol + ATP = sn-glycerol 3-phosphate + ADP + H(+). It functions in the pathway polyol metabolism; glycerol degradation via glycerol kinase pathway; sn-glycerol 3-phosphate from glycerol: step 1/1. Its activity is regulated as follows. Activated by phosphorylation and inhibited by fructose 1,6-bisphosphate (FBP). In terms of biological role, key enzyme in the regulation of glycerol uptake and metabolism. Catalyzes the phosphorylation of glycerol to yield sn-glycerol 3-phosphate. This chain is Glycerol kinase, found in Listeria monocytogenes serotype 4b (strain F2365).